Reading from the N-terminus, the 364-residue chain is UDP-N-acetylglucosamine--N-acetylmuramyl-(pentapeptide) pyrophosphoryl-undecaprenol N-acetylglucosamine transferase (364 aa).

Residues 10 to 12 (TGG), asparagine 124, serine 195, isoleucine 250, and glutamine 295 each bind UDP-N-acetyl-alpha-D-glucosamine.

Belongs to the glycosyltransferase 28 family. MurG subfamily.

The protein localises to the cell membrane. It carries out the reaction Mur2Ac(oyl-L-Ala-gamma-D-Glu-L-Lys-D-Ala-D-Ala)-di-trans,octa-cis-undecaprenyl diphosphate + UDP-N-acetyl-alpha-D-glucosamine = beta-D-GlcNAc-(1-&gt;4)-Mur2Ac(oyl-L-Ala-gamma-D-Glu-L-Lys-D-Ala-D-Ala)-di-trans,octa-cis-undecaprenyl diphosphate + UDP + H(+). It participates in cell wall biogenesis; peptidoglycan biosynthesis. In terms of biological role, cell wall formation. Catalyzes the transfer of a GlcNAc subunit on undecaprenyl-pyrophosphoryl-MurNAc-pentapeptide (lipid intermediate I) to form undecaprenyl-pyrophosphoryl-MurNAc-(pentapeptide)GlcNAc (lipid intermediate II). The chain is UDP-N-acetylglucosamine--N-acetylmuramyl-(pentapeptide) pyrophosphoryl-undecaprenol N-acetylglucosamine transferase from Levilactobacillus brevis (strain ATCC 367 / BCRC 12310 / CIP 105137 / JCM 1170 / LMG 11437 / NCIMB 947 / NCTC 947) (Lactobacillus brevis).